The primary structure comprises 241 residues: 3-deoxy-manno-octulosonate cytidylyltransferase (241 aa).

It belongs to the KdsB family.

Its subcellular location is the cytoplasm. The enzyme catalyses 3-deoxy-alpha-D-manno-oct-2-ulosonate + CTP = CMP-3-deoxy-beta-D-manno-octulosonate + diphosphate. It participates in nucleotide-sugar biosynthesis; CMP-3-deoxy-D-manno-octulosonate biosynthesis; CMP-3-deoxy-D-manno-octulosonate from 3-deoxy-D-manno-octulosonate and CTP: step 1/1. Its pathway is bacterial outer membrane biogenesis; lipopolysaccharide biosynthesis. Functionally, activates KDO (a required 8-carbon sugar) for incorporation into bacterial lipopolysaccharide in Gram-negative bacteria. The sequence is that of 3-deoxy-manno-octulosonate cytidylyltransferase from Rickettsia rickettsii (strain Sheila Smith).